Here is a 110-residue protein sequence, read N- to C-terminus: Small ribosomal subunit protein bS16 (110 aa).

Positions 87 to 110 (ARNNPEKAVPRKERKAAAEAAAKK) are disordered.

Belongs to the bacterial ribosomal protein bS16 family.

In Rhodopseudomonas palustris (strain BisA53), this protein is Small ribosomal subunit protein bS16.